We begin with the raw amino-acid sequence, 218 residues long: Phosphoribosylformylglycinamidine synthase subunit PurQ (218 aa).

Residues 2–218 (RVGVIRFPGS…FFRGILKFRG (217 aa)) enclose the Glutamine amidotransferase type-1 domain. Residue Cys-85 is the Nucleophile of the active site. Residues His-192 and Glu-194 contribute to the active site.

In terms of assembly, part of the FGAM synthase complex composed of 1 PurL, 1 PurQ and 2 PurS subunits.

It localises to the cytoplasm. The catalysed reaction is N(2)-formyl-N(1)-(5-phospho-beta-D-ribosyl)glycinamide + L-glutamine + ATP + H2O = 2-formamido-N(1)-(5-O-phospho-beta-D-ribosyl)acetamidine + L-glutamate + ADP + phosphate + H(+). The enzyme catalyses L-glutamine + H2O = L-glutamate + NH4(+). The protein operates within purine metabolism; IMP biosynthesis via de novo pathway; 5-amino-1-(5-phospho-D-ribosyl)imidazole from N(2)-formyl-N(1)-(5-phospho-D-ribosyl)glycinamide: step 1/2. Its function is as follows. Part of the phosphoribosylformylglycinamidine synthase complex involved in the purines biosynthetic pathway. Catalyzes the ATP-dependent conversion of formylglycinamide ribonucleotide (FGAR) and glutamine to yield formylglycinamidine ribonucleotide (FGAM) and glutamate. The FGAM synthase complex is composed of three subunits. PurQ produces an ammonia molecule by converting glutamine to glutamate. PurL transfers the ammonia molecule to FGAR to form FGAM in an ATP-dependent manner. PurS interacts with PurQ and PurL and is thought to assist in the transfer of the ammonia molecule from PurQ to PurL. The chain is Phosphoribosylformylglycinamidine synthase subunit PurQ from Methanothermobacter thermautotrophicus (strain ATCC 29096 / DSM 1053 / JCM 10044 / NBRC 100330 / Delta H) (Methanobacterium thermoautotrophicum).